Reading from the N-terminus, the 292-residue chain is MQKYEKLEKIGEGTYGTVFKGRNRETLEIVALKRVRLDEDDEGVPSSALREICLLKELKHKNIVRLYDVLHSEKKLTLVFEHCDQDLKKYFDSLNGDIDMAVCRSFMLQLLRGLAFCHSHNVLHRDLKPQNLLINKNGELKLADFGLARAFGIPVKCYSAEVVTLWYRPPDVLFGAKLYTTSIDMWSAGCIFAELADAGRPLFPGSDVLDQLMKIFRVLGTPTEESWPGVTHLSDYVALPHFPAITSWSQIVPRLSSKGRDLLQKLLVCRPNQRVSAEQAMQHPYFTDSSNH.

The region spanning 4-286 (YEKLEKIGEG…AEQAMQHPYF (283 aa)) is the Protein kinase domain. ATP contacts are provided by residues 10–18 (IGEGTYGTV) and K33. Phosphothreonine is present on T14. Y15 is modified (phosphotyrosine). D126 functions as the Proton acceptor in the catalytic mechanism. S159 is subject to Phosphoserine.

This sequence belongs to the protein kinase superfamily. CMGC Ser/Thr protein kinase family. CDC2/CDKX subfamily.

It catalyses the reaction L-seryl-[protein] + ATP = O-phospho-L-seryl-[protein] + ADP + H(+). It carries out the reaction L-threonyl-[protein] + ATP = O-phospho-L-threonyl-[protein] + ADP + H(+). Probably involved in the control of the cell cycle. Interacts with D1 and D3-type G1 cyclins. Possible regulator of neuronal differentiation and/or development. The protein is Cyclin-dependent kinase 5 homolog (Cdk5) of Glossina morsitans morsitans (Savannah tsetse fly).